The following is a 354-amino-acid chain: MKKTSTRLADGRELVYYDLRDDTVRDAVDRRPLERTVTTSEVRRDPLLGDSAPSRLAPQGRTYHPPADQCPLCPSGRGTAERDPAYDVVVFENRFPSLAGDSGRCEVVCFTSDHDASFADLSEEQARLVVDAWTDRTSELSHLPSVEQVFCFENRGAEIGVTLGHPHGQIYAYPFTTPRTALMLRSLAAHKDATGGGNLFDSVLEEELAGERVVLEGEHWAAFVAYGAHWPYEVHLYPKRRVPDLLGLDEAARTEFPKVYLELLRRFDRIFGEGEPPTPYIAAWHQAPFGQLEFEGVTRDDFALHLNFSLPPYVRQAEVPRGLRIRHERVHQRDVPPERAAERLREVADVHERE.

A disordered region spans residues 36 to 72 (TVTTSEVRRDPLLGDSAPSRLAPQGRTYHPPADQCPL). C70, C73, and H114 together coordinate Zn(2+). N154 contacts UDP-alpha-D-glucose. H165 contacts Zn(2+). H167 serves as the catalytic Tele-UMP-histidine intermediate. 2 residues coordinate UDP-alpha-D-glucose: Q169 and Q332.

This sequence belongs to the galactose-1-phosphate uridylyltransferase type 1 family. Zn(2+) serves as cofactor.

The enzyme catalyses alpha-D-galactose 1-phosphate + UDP-alpha-D-glucose = alpha-D-glucose 1-phosphate + UDP-alpha-D-galactose. The protein operates within carbohydrate metabolism; galactose metabolism. The chain is Galactose-1-phosphate uridylyltransferase (galT) from Streptomyces lividans.